Reading from the N-terminus, the 602-residue chain is ATP-dependent RNA helicase DeaD (602 aa).

The Q motif signature appears at 6 to 34 (MTFSSFGLNSCIITALNDIGYVQPSPIQA). The Helicase ATP-binding domain maps to 37 to 208 (IPYLIKGKDV…RRFMKNPKEI (172 aa)). 50–57 (AQTGSGKT) is a binding site for ATP. The short motif at 156-159 (DEAD) is the DEAD box element. A Helicase C-terminal domain is found at 231-378 (KTDALIRFLE…EVNLPKSDFL (148 aa)).

This sequence belongs to the DEAD box helicase family. DeaD/CsdA subfamily.

It localises to the cytoplasm. It catalyses the reaction ATP + H2O = ADP + phosphate + H(+). DEAD-box RNA helicase involved in various cellular processes at low temperature, including ribosome biogenesis, mRNA degradation and translation initiation. This chain is ATP-dependent RNA helicase DeaD, found in Buchnera aphidicola subsp. Baizongia pistaciae (strain Bp).